Reading from the N-terminus, the 721-residue chain is DNA ligase (721 aa).

NAD(+) is bound by residues 39–43 (DAEYD), 89–90 (SL), and glutamate 123. Catalysis depends on lysine 125, which acts as the N6-AMP-lysine intermediate. Residues arginine 146, glutamate 186, lysine 302, and lysine 326 each coordinate NAD(+). Cysteine 418, cysteine 421, cysteine 436, and cysteine 442 together coordinate Zn(2+). The interval 556–588 (QASSAAREGEPANADGAYDPATVTPDSDTAGAE) is disordered. One can recognise a BRCT domain in the interval 641–721 (TKDSAVAGKT…AWAEIVRQAG (81 aa)).

Belongs to the NAD-dependent DNA ligase family. LigA subfamily. Requires Mg(2+) as cofactor. Mn(2+) serves as cofactor.

The enzyme catalyses NAD(+) + (deoxyribonucleotide)n-3'-hydroxyl + 5'-phospho-(deoxyribonucleotide)m = (deoxyribonucleotide)n+m + AMP + beta-nicotinamide D-nucleotide.. Its function is as follows. DNA ligase that catalyzes the formation of phosphodiester linkages between 5'-phosphoryl and 3'-hydroxyl groups in double-stranded DNA using NAD as a coenzyme and as the energy source for the reaction. It is essential for DNA replication and repair of damaged DNA. The chain is DNA ligase from Novosphingobium aromaticivorans (strain ATCC 700278 / DSM 12444 / CCUG 56034 / CIP 105152 / NBRC 16084 / F199).